The chain runs to 240 residues: Transcriptional activator protein VanR (240 aa).

Residues 169 to 234 (DAKPRAVLTA…QAITKAILGG (66 aa)) form the HTH luxR-type domain. A DNA-binding region (H-T-H motif) is located at residues 193–212 (AWEIATIINTSERTVKFHFS).

Belongs to the autoinducer-regulated transcriptional regulatory protein family.

In terms of biological role, probable transcriptional activator. Binds to autoinducer molecule ODHL. This is Transcriptional activator protein VanR (vanR) from Vibrio anguillarum (Listonella anguillarum).